We begin with the raw amino-acid sequence, 184 residues long: Endoribonuclease YbeY (184 aa).

Zn(2+) contacts are provided by histidine 118, histidine 122, and histidine 128.

This sequence belongs to the endoribonuclease YbeY family. Zn(2+) is required as a cofactor.

Its subcellular location is the cytoplasm. In terms of biological role, single strand-specific metallo-endoribonuclease involved in late-stage 70S ribosome quality control and in maturation of the 3' terminus of the 16S rRNA. This chain is Endoribonuclease YbeY, found in Nocardia farcinica (strain IFM 10152).